We begin with the raw amino-acid sequence, 211 residues long: Glycerol-3-phosphate acyltransferase (211 aa).

Transmembrane regions (helical) follow at residues 5 to 25 (ALGMMLIAYLCGSISSAILFC), 80 to 100 (PLYLGLTAIAACLGHIYPVFF), 112 to 132 (FGAIAPIGWDLTGLMTGTWLL), and 138 to 158 (GYSSLGAIVSALIAPFYVWWF).

This sequence belongs to the PlsY family. In terms of assembly, probably interacts with PlsX.

It is found in the cell inner membrane. The enzyme catalyses an acyl phosphate + sn-glycerol 3-phosphate = a 1-acyl-sn-glycero-3-phosphate + phosphate. It functions in the pathway lipid metabolism; phospholipid metabolism. Catalyzes the transfer of an acyl group from acyl-phosphate (acyl-PO(4)) to glycerol-3-phosphate (G3P) to form lysophosphatidic acid (LPA). This enzyme utilizes acyl-phosphate as fatty acyl donor, but not acyl-CoA or acyl-ACP. The sequence is that of Glycerol-3-phosphate acyltransferase from Pectobacterium carotovorum subsp. carotovorum (strain PC1).